The primary structure comprises 270 residues: Carboxy-S-adenosyl-L-methionine synthase (270 aa).

S-adenosyl-L-methionine contacts are provided by residues Y65, 90 to 92 (GCS), 143 to 144 (DI), N158, and R225.

This sequence belongs to the class I-like SAM-binding methyltransferase superfamily. Cx-SAM synthase family. In terms of assembly, homodimer.

It catalyses the reaction prephenate + S-adenosyl-L-methionine = carboxy-S-adenosyl-L-methionine + 3-phenylpyruvate + H2O. Catalyzes the conversion of S-adenosyl-L-methionine (SAM) to carboxy-S-adenosyl-L-methionine (Cx-SAM). This Chromohalobacter salexigens (strain ATCC BAA-138 / DSM 3043 / CIP 106854 / NCIMB 13768 / 1H11) protein is Carboxy-S-adenosyl-L-methionine synthase.